Here is a 320-residue protein sequence, read N- to C-terminus: Serpentine receptor class delta-28 (320 aa).

The next 7 membrane-spanning stretches (helical) occupy residues 5–25 (LLHTVLSVVGVSLNAFMMYLA), 38–58 (AIITIKTFTDILTSAMSFFVM), 83–103 (ACYIGHMFMLCFLECNLIWMI), 122–142 (SLVFVAICLSIPSFIHMATWI), 176–196 (LTLIIQLFITSILVLIAYAWI), 230–250 (FLPSFIFLGVFVFVGMFTQLI), and 258–278 (LVSVIFMFSPICSPFSYILFV).

This sequence belongs to the nematode receptor-like protein srd family.

It localises to the membrane. This chain is Serpentine receptor class delta-28 (srd-28), found in Caenorhabditis elegans.